The primary structure comprises 177 residues: Probable phospholipid hydroperoxide glutathione peroxidase (177 aa).

Residue Cys42 is part of the active site.

This sequence belongs to the glutathione peroxidase family.

It is found in the cytoplasm. It catalyses the reaction a hydroperoxy polyunsaturated fatty acid + 2 glutathione = a hydroxy polyunsaturated fatty acid + glutathione disulfide + H2O. In terms of biological role, protects cells and enzymes from oxidative damage, by catalyzing the reduction of hydrogen peroxide, lipid peroxides and organic hydroperoxide, by glutathione. The polypeptide is Probable phospholipid hydroperoxide glutathione peroxidase (Encephalitozoon cuniculi (strain GB-M1) (Microsporidian parasite)).